A 430-amino-acid chain; its full sequence is Cortical fragment-lytic enzyme (430 aa).

2 consecutive LysM domains span residues 3–47 (QIVT…ALIV) and 52–96 (NNYY…QLYI). One can recognise a GH18 domain in the interval 104-430 (VESIAYLQPS…VENFTITKKG (327 aa)). Glu-219 serves as the catalytic Proton donor.

It belongs to the glycosyl hydrolase 18 family. Chitinase class II subfamily.

It is found in the forespore. In terms of biological role, N-acetylglucosaminidase involved in cortex peptidoglycan degradation during germination. Cleaves only partially degraded spore peptidoglycans. Recognizes muramic acid delta-lactam residues specific to spore peptidoglycans. The protein is Cortical fragment-lytic enzyme of Bacillus anthracis.